We begin with the raw amino-acid sequence, 160 residues long: MRLVLACVGRLKAGAERDLVTRYVDRIRPAGRPLGLGPCDMIEIPESAARRAEDRMAEEGAALLAALPAGAGLIALDPRGRQLSSEDFATRMAAQRDGGLPALAFIIGGADGLADAVRDKAALMVAYGTATFPHQLVRVMLAEQIYRAVTILAGHPYHRA.

Residues Leu-76 and Gly-108 each contribute to the S-adenosyl-L-methionine site.

It belongs to the RNA methyltransferase RlmH family. In terms of assembly, homodimer.

It is found in the cytoplasm. It catalyses the reaction pseudouridine(1915) in 23S rRNA + S-adenosyl-L-methionine = N(3)-methylpseudouridine(1915) in 23S rRNA + S-adenosyl-L-homocysteine + H(+). Functionally, specifically methylates the pseudouridine at position 1915 (m3Psi1915) in 23S rRNA. The polypeptide is Ribosomal RNA large subunit methyltransferase H (Xanthobacter autotrophicus (strain ATCC BAA-1158 / Py2)).